A 471-amino-acid chain; its full sequence is Glutamate--tRNA ligase 1 (471 aa).

Residues 10–20 (PSPTGFLHIGG) carry the 'HIGH' region motif. The interval 113–140 (ARKEGRPPRYDGRWRDRDPSEAPKDRDP) is disordered. The 'KMSKS' region motif lies at 239–243 (KLSKR). K242 provides a ligand contact to ATP.

This sequence belongs to the class-I aminoacyl-tRNA synthetase family. Glutamate--tRNA ligase type 1 subfamily. Monomer.

Its subcellular location is the cytoplasm. It carries out the reaction tRNA(Glu) + L-glutamate + ATP = L-glutamyl-tRNA(Glu) + AMP + diphosphate. In terms of biological role, catalyzes the attachment of glutamate to tRNA(Glu) in a two-step reaction: glutamate is first activated by ATP to form Glu-AMP and then transferred to the acceptor end of tRNA(Glu). The protein is Glutamate--tRNA ligase 1 of Xanthobacter autotrophicus (strain ATCC BAA-1158 / Py2).